The primary structure comprises 157 residues: 3-hydroxyacyl-[acyl-carrier-protein] dehydratase FabZ (157 aa).

H58 is a catalytic residue.

It belongs to the thioester dehydratase family. FabZ subfamily.

The protein resides in the cytoplasm. The catalysed reaction is a (3R)-hydroxyacyl-[ACP] = a (2E)-enoyl-[ACP] + H2O. In terms of biological role, involved in unsaturated fatty acids biosynthesis. Catalyzes the dehydration of short chain beta-hydroxyacyl-ACPs and long chain saturated and unsaturated beta-hydroxyacyl-ACPs. This Brucella abortus biovar 1 (strain 9-941) protein is 3-hydroxyacyl-[acyl-carrier-protein] dehydratase FabZ.